A 159-amino-acid chain; its full sequence is 2-C-methyl-D-erythritol 2,4-cyclodiphosphate synthase (159 aa).

2 residues coordinate a divalent metal cation: Asp-10 and His-12. 4-CDP-2-C-methyl-D-erythritol 2-phosphate contacts are provided by residues 10-12 (DVH) and 36-37 (HS). His-44 provides a ligand contact to a divalent metal cation. 4-CDP-2-C-methyl-D-erythritol 2-phosphate-binding positions include 58 to 60 (DIG), 134 to 137 (TTTE), Phe-141, and Arg-144.

It belongs to the IspF family. As to quaternary structure, homotrimer. The cofactor is a divalent metal cation.

The enzyme catalyses 4-CDP-2-C-methyl-D-erythritol 2-phosphate = 2-C-methyl-D-erythritol 2,4-cyclic diphosphate + CMP. The protein operates within isoprenoid biosynthesis; isopentenyl diphosphate biosynthesis via DXP pathway; isopentenyl diphosphate from 1-deoxy-D-xylulose 5-phosphate: step 4/6. In terms of biological role, involved in the biosynthesis of isopentenyl diphosphate (IPP) and dimethylallyl diphosphate (DMAPP), two major building blocks of isoprenoid compounds. Catalyzes the conversion of 4-diphosphocytidyl-2-C-methyl-D-erythritol 2-phosphate (CDP-ME2P) to 2-C-methyl-D-erythritol 2,4-cyclodiphosphate (ME-CPP) with a corresponding release of cytidine 5-monophosphate (CMP). This chain is 2-C-methyl-D-erythritol 2,4-cyclodiphosphate synthase, found in Bacteroides thetaiotaomicron (strain ATCC 29148 / DSM 2079 / JCM 5827 / CCUG 10774 / NCTC 10582 / VPI-5482 / E50).